Consider the following 498-residue polypeptide: Protein MGF 505-5R (498 aa).

The protein belongs to the asfivirus MGF 505 family.

Its function is as follows. Plays a role in virus cell tropism, and may be required for efficient virus replication in macrophages. The sequence is that of Protein MGF 505-5R from African swine fever virus (strain Badajoz 1971 Vero-adapted) (Ba71V).